The sequence spans 445 residues: Chromosomal replication initiator protein DnaA (445 aa).

The interval 1 to 73 is domain I, interacts with DnaA modulators; that stretch reads MSTHLTETWE…VNALKLLTSK (73 aa). A domain II region spans residues 73–106; that stretch reads KKYNIDFIVTTEEKIEKNHNNEKSNIVVNDEMST. The interval 107–323 is domain III, AAA+ region; that stretch reads MLNPKYTFDS…GALIRIVAFS (217 aa). ATP contacts are provided by Gly151, Gly153, Lys154, and Thr155. A domain IV, binds dsDNA region spans residues 324-445; sequence SLTNKEISVD…KELNKRINQK (122 aa).

It belongs to the DnaA family. As to quaternary structure, oligomerizes as a right-handed, spiral filament on DNA at oriC.

It is found in the cytoplasm. Its function is as follows. Plays an essential role in the initiation and regulation of chromosomal replication. ATP-DnaA binds to the origin of replication (oriC) to initiate formation of the DNA replication initiation complex once per cell cycle. Binds the DnaA box (a 9 base pair repeat at the origin) and separates the double-stranded (ds)DNA. Forms a right-handed helical filament on oriC DNA; dsDNA binds to the exterior of the filament while single-stranded (ss)DNA is stabiized in the filament's interior. The ATP-DnaA-oriC complex binds and stabilizes one strand of the AT-rich DNA unwinding element (DUE), permitting loading of DNA polymerase. After initiation quickly degrades to an ADP-DnaA complex that is not apt for DNA replication. Binds acidic phospholipids. This chain is Chromosomal replication initiator protein DnaA, found in Clostridium botulinum (strain Okra / Type B1).